Reading from the N-terminus, the 217-residue chain is Adenylate kinase (217 aa).

Gly-10–Thr-15 is an ATP binding site. The NMP stretch occupies residues Ser-30–Val-59. Residues Thr-31, Arg-36, Ala-57 to Val-59, Gly-85 to Arg-88, and Gln-92 contribute to the AMP site. The LID stretch occupies residues Gly-126–Asp-163. Residue Arg-127 participates in ATP binding. 4 residues coordinate Zn(2+): Cys-130, Cys-133, Cys-150, and Cys-153. Residues Arg-160 and Arg-171 each coordinate AMP. Glu-199 contacts ATP.

The protein belongs to the adenylate kinase family. In terms of assembly, monomer.

It is found in the cytoplasm. It carries out the reaction AMP + ATP = 2 ADP. It functions in the pathway purine metabolism; AMP biosynthesis via salvage pathway; AMP from ADP: step 1/1. Functionally, catalyzes the reversible transfer of the terminal phosphate group between ATP and AMP. Plays an important role in cellular energy homeostasis and in adenine nucleotide metabolism. The protein is Adenylate kinase of Geobacter sulfurreducens (strain ATCC 51573 / DSM 12127 / PCA).